The primary structure comprises 205 residues: Recombination protein RecR (205 aa).

Residues 58–75 (CSECQNVTDRDSDPCVLC) form a C4-type zinc finger. The region spanning 83-182 (TVICVVESPV…AVSKIARGIP (100 aa)) is the Toprim domain.

This sequence belongs to the RecR family.

In terms of biological role, may play a role in DNA repair. It seems to be involved in an RecBC-independent recombinational process of DNA repair. It may act with RecF and RecO. The polypeptide is Recombination protein RecR (Chlorobium phaeobacteroides (strain DSM 266 / SMG 266 / 2430)).